We begin with the raw amino-acid sequence, 273 residues long: Undecaprenyl-diphosphatase (273 aa).

The next 7 helical transmembrane spans lie at 4–24 (LILI…FLPI), 43–63 (KAQV…CWEY), 82–102 (FVLN…LFIK), 108–128 (LFHP…ILWA), 183–203 (AAEF…FYDV), 217–237 (MFVV…RGFI), and 253–273 (IGFG…WSAG).

This sequence belongs to the UppP family.

The protein resides in the cell inner membrane. It catalyses the reaction di-trans,octa-cis-undecaprenyl diphosphate + H2O = di-trans,octa-cis-undecaprenyl phosphate + phosphate + H(+). Catalyzes the dephosphorylation of undecaprenyl diphosphate (UPP). Confers resistance to bacitracin. In Nitrosomonas eutropha (strain DSM 101675 / C91 / Nm57), this protein is Undecaprenyl-diphosphatase.